Reading from the N-terminus, the 316-residue chain is Delta(1)-pyrroline-2-carboxylate reductase (316 aa).

Belongs to the ornithine cyclodeaminase/mu-crystallin family.

The catalysed reaction is L-proline + NAD(+) = 1-pyrroline-2-carboxylate + NADH + H(+). It carries out the reaction L-proline + NADP(+) = 1-pyrroline-2-carboxylate + NADPH + H(+). Catalyzes the reduction of Delta(1)-pyrroline-2-carboxylate (Pyr2C) to L-proline, using preferentially NADPH over NADH as the electron donor. Is likely involved in a degradation pathway that converts trans-3-hydroxy-L-proline (t3LHyp) to L-proline, which would allow P.denitrificans to grow on t3LHyp as a sole carbon source. This is Delta(1)-pyrroline-2-carboxylate reductase from Paracoccus denitrificans (strain Pd 1222).